We begin with the raw amino-acid sequence, 502 residues long: ATP synthase subunit alpha (502 aa).

169 to 176 is an ATP binding site; sequence GDRQTGKT.

Belongs to the ATPase alpha/beta chains family. As to quaternary structure, F-type ATPases have 2 components, CF(1) - the catalytic core - and CF(0) - the membrane proton channel. CF(1) has five subunits: alpha(3), beta(3), gamma(1), delta(1), epsilon(1). CF(0) has three main subunits: a(1), b(2) and c(9-12). The alpha and beta chains form an alternating ring which encloses part of the gamma chain. CF(1) is attached to CF(0) by a central stalk formed by the gamma and epsilon chains, while a peripheral stalk is formed by the delta and b chains.

The protein localises to the cell membrane. The catalysed reaction is ATP + H2O + 4 H(+)(in) = ADP + phosphate + 5 H(+)(out). Its function is as follows. Produces ATP from ADP in the presence of a proton gradient across the membrane. The alpha chain is a regulatory subunit. The chain is ATP synthase subunit alpha from Bacillus pumilus (strain SAFR-032).